We begin with the raw amino-acid sequence, 339 residues long: Fructose-1,6-bisphosphatase, cytosolic (339 aa).

Residues Glu-71, Glu-100, Asp-121, Leu-123, and Asp-124 each coordinate Mg(2+). Substrate contacts are provided by residues 124–127 (DGSS), Asn-215, Tyr-247, Tyr-267, and Lys-277. Glu-283 serves as a coordination point for Mg(2+).

It belongs to the FBPase class 1 family. The cofactor is Mg(2+).

The protein resides in the cytoplasm. It catalyses the reaction beta-D-fructose 1,6-bisphosphate + H2O = beta-D-fructose 6-phosphate + phosphate. The polypeptide is Fructose-1,6-bisphosphatase, cytosolic (Oryza sativa subsp. indica (Rice)).